The chain runs to 198 residues: Cyclin-dependent kinase inhibitor 1B (198 aa).

Residues 1–11 are compositionally biased toward polar residues; sequence MSNVRVSNGSP. A disordered region spans residues 1 to 22; the sequence is MSNVRVSNGSPSLERMDARQAE. The residue at position 10 (S10) is a Phosphoserine; by UHMK1. The segment at 51–91 is interaction with CDK2; sequence DMEEASQRKWNFDFQNHKPLEGKYEWQEVEKGSLPEFYYRP. A Phosphotyrosine; by SRC modification is found at Y74. Residues 87-198 are disordered; it reads FYYRPPRPPK…KKPGLRRRQT (112 aa). Phosphotyrosine; by ABL, LYN and SRC is present on Y88. Residue Y89 is modified to Phosphotyrosine. Polar residues predominate over residues 104–113; that stretch reads QESQDVSGNR. Over residues 126–137 the composition is skewed to basic and acidic residues; that stretch reads EDTHLVDQKTDT. The Nuclear localization signal signature appears at 153 to 169; the sequence is KRPATDDSSPQNKRANR. T157 bears the Phosphothreonine; by CaMK1, PKB/AKT1 and PIM1 mark. T170 carries the post-translational modification Phosphothreonine. Over residues 175–186 the composition is skewed to polar residues; that stretch reads SDGSPNAGSVEQ. T187 carries the phosphothreonine; by PKB/AKT1, CDK1 and CDK2 modification. T198 bears the Phosphothreonine; by CaMK1, PKB/AKT1, RPS6KA1, RPS6KA3 and PIM1 mark.

It belongs to the CDI family. In terms of assembly, forms a ternary complex composed of CCNE1, CDK2 and CDKN1B. Interacts directly with CCNE1; the interaction is inhibited by CDK2-dependent phosphorylation on Thr-187. Interacts with COPS5, subunit of the COP9 signalosome complex; the interaction leads to CDKN1B degradation. Interacts with NUP50; the interaction leads to nuclear import and degradation of phosphorylated CDKN1B. Interacts with CCND1 and SNX6. Interacts (Thr-198-phosphorylated form) with 14-3-3 proteins, binds strongly YWHAQ, weakly YWHAE and YWHAH, but not YWHAB nor YWHAZ; the interaction with YWHAQ results in translocation to the cytoplasm. Interacts with AKT1 and LYN; the interactions lead to cytoplasmic mislocation, phosphorylation of CDKN1B and inhibition of cell cycle arrest. Forms a ternary complex with CCNA2 and CDK2; CDKN1B inhibits the kinase activity of CDK2 through conformational rearrangements. Interacts (unphosphorylated form) with CDK2. Forms a complex with CDK2 and SPDYA, but does not directly interact with SPDYA. Forms a ternary complex composed of cyclin D, CDK4 and CDKN1B. Interacts (phosphorylated on Tyr-88 and Tyr-89) with CDK4; the interaction is required for cyclin D and CDK4 complex assembly, induces nuclear translocation and activates the CDK4 kinase activity. Interacts with GRB2. Interacts with PIM1. Identified in a complex with SKP1, SKP2 and CKS1B. Interacts with UHMK1; the interaction leads to cytoplasmic mislocation, phosphorylation of CDKN1B and inhibition of cell cycle arrest. Also interacts with CDK1. Dephosphorylated on Thr-187 by PPM1H, leading to CDKN1B stability. Post-translationally, phosphorylated; phosphorylation occurs on serine, threonine and tyrosine residues. Phosphorylation on Ser-10 is the major site of phosphorylation in resting cells, takes place at the G(0)-G(1) phase and leads to protein stability. Phosphorylation on other sites is greatly enhanced by mitogens, growth factors, cMYC and in certain cancer cell lines. The phosphorylated form found in the cytoplasm is inactivate. Phosphorylation on Thr-198 is required for interaction with 14-3-3 proteins. Phosphorylation on Thr-187, by CDK1 and CDK2 leads to protein ubiquitination and proteasomal degradation. Tyrosine phosphorylation promotes this process. Phosphorylation by PKB/AKT1 can be suppressed by LY294002, an inhibitor of the catalytic subunit of PI3K. Phosphorylation on Tyr-88 and Tyr-89 has no effect on binding CDK2, but is required for binding CDK4. Dephosphorylated on tyrosine residues by G-CSF. Dephosphorylated on Thr-187 by PPM1H, leading to CDKN1B stability. Ubiquitinated; in the cytoplasm by the KPC complex (composed of RNF123/KPC1 and UBAC1/KPC2) and, in the nucleus, by SCF(SKP2). The latter requires prior phosphorylation on Thr-187. Ubiquitinated; by a TRIM21-containing SCF(SKP2)-like complex; leads to its degradation. In terms of processing, subject to degradation in the lysosome. Interaction with SNX6 promotes lysosomal degradation.

It is found in the nucleus. Its subcellular location is the cytoplasm. The protein localises to the endosome. Important regulator of cell cycle progression. Inhibits the kinase activity of CDK2 bound to cyclin A, but has little inhibitory activity on CDK2 bound to SPDYA. Involved in G1 arrest. Potent inhibitor of cyclin E- and cyclin A-CDK2 complexes. Forms a complex with cyclin type D-CDK4 complexes and is involved in the assembly, stability, and modulation of CCND1-CDK4 complex activation. Acts either as an inhibitor or an activator of cyclin type D-CDK4 complexes depending on its phosphorylation state and/or stoichometry. The chain is Cyclin-dependent kinase inhibitor 1B (CDKN1B) from Felis catus (Cat).